Consider the following 285-residue polypeptide: Transmembrane protein 53-B (285 aa).

A helical transmembrane segment spans residues 165 to 185 (FLALAAFAIMVIILRIVLYPV).

This sequence belongs to the TMEM53 family.

It is found in the nucleus outer membrane. Its function is as follows. Ensures normal bone formation, through the negative regulation of bone morphogenetic protein (BMP) signaling in osteoblast lineage cells by blocking cytoplasm-nucleus translocation of phosphorylated SMAD proteins. The polypeptide is Transmembrane protein 53-B (tmem53-b) (Xenopus laevis (African clawed frog)).